The sequence spans 208 residues: MHYNIILLVDGTLSLEQANQVEQKHQKLLEKATEFKSEYLGLKELAYPIKKQLSAHYYRWSFHGESNCTKEFKRAANINKQIIRELIINREKDYGYLGSVNPKKQQLSLQKLTKYNEIIASENNPDNPDAPVTSGLASVKPRLSRVEKQKERELEKWTVVHQSGNFDTVQINPYRPRIKRFLQNNQQTSQANNNQPRFQNQFKKGAKP.

Disordered regions lie at residues 121–143 and 185–208; these read SENNPDNPDAPVTSGLASVKPRL and NQQTSQANNNQPRFQNQFKKGAKP. The segment covering 185–195 has biased composition (low complexity); the sequence is NQQTSQANNNQ.

This sequence belongs to the bacterial ribosomal protein bS6 family.

Its function is as follows. Binds together with bS18 to 16S ribosomal RNA. This Mycoplasma genitalium (strain ATCC 33530 / DSM 19775 / NCTC 10195 / G37) (Mycoplasmoides genitalium) protein is Small ribosomal subunit protein bS6 (rpsF).